We begin with the raw amino-acid sequence, 335 residues long: Zinc-type alcohol dehydrogenase-like protein SAS2087 (335 aa).

This sequence belongs to the zinc-containing alcohol dehydrogenase family. Quinone oxidoreductase subfamily.

This chain is Zinc-type alcohol dehydrogenase-like protein SAS2087, found in Staphylococcus aureus (strain MSSA476).